A 342-amino-acid polypeptide reads, in one-letter code: MAPQAYPTAGQTTTVCVTGAAGFMASWLVKRLLEKGYIVHATVRDPENKAKVSHLLNLPGATDRLKLFRAELCEDGSFDAAVAGCNGVFHVATPTEFMPKDPENDLIKPAIEGTLNVLKSCTKVDSIKRVVVTSSAATVSINNSSEQNQYIDESCWTDVNFLTSQKPPGWAYPVSKTLAEQAALKYAEEHSLDVVTVIPVLVVGPAVTPTVPSSVELALSLITGDEFKMGALKGMQFVSGSISLVHIDDVCSAQIFLMEKPSAQGRYICFPVNTGIPQLAEFLSKRYPQYKVPTKFDDVPATPKLTISSQKLLDCGFSFKYGIEDIYDQAIEYMKTKGLLTC.

Residues arginine 44, lysine 51, 71–72, 91–93, tyrosine 172, lysine 176, 199–202, and serine 214 contribute to the NADP(+) site; these read EL, VAT, and PVLV. The active-site Proton donor is lysine 176.

Belongs to the NAD(P)-dependent epimerase/dehydratase family. Dihydroflavonol-4-reductase subfamily. In terms of tissue distribution, highly expressed in leaves and weakly in stems. Not expressed in roots.

The protein operates within secondary metabolite biosynthesis; flavonoid biosynthesis. The chain is Putative anthocyanidin reductase from Ginkgo biloba (Ginkgo).